We begin with the raw amino-acid sequence, 197 residues long: Prefoldin subunit 3 (197 aa).

Ala-2 is modified (N-acetylalanine). Lys-59 bears the N6-acetyllysine mark.

Belongs to the prefoldin subunit alpha family. Heterohexamer of two PFD-alpha type and four PFD-beta type subunits. Binds to the C-terminal part of VHL. In terms of tissue distribution, ubiquitous.

It is found in the cytoplasm. It localises to the nucleus. In terms of biological role, binds specifically to cytosolic chaperonin (c-CPN) and transfers target proteins to it. Binds to nascent polypeptide chain and promotes folding in an environment in which there are many competing pathways for nonnative proteins. This is Prefoldin subunit 3 (VBP1) from Homo sapiens (Human).